Here is a 233-residue protein sequence, read N- to C-terminus: Sugar fermentation stimulation protein homolog (233 aa).

The protein belongs to the SfsA family.

The polypeptide is Sugar fermentation stimulation protein homolog (Rhodospirillum centenum (strain ATCC 51521 / SW)).